Consider the following 286-residue polypeptide: Meteorin-like protein (286 aa).

The signal sequence occupies residues 1 to 21; the sequence is MLSPFLAYLLSVVLLCRIARS. Disulfide bonds link cysteine 28-cysteine 51, cysteine 84-cysteine 120, cysteine 165-cysteine 235, cysteine 168-cysteine 259, and cysteine 178-cysteine 281.

The protein belongs to the meteorin family.

The protein resides in the secreted. Hormone induced following exercise or cold exposure that promotes energy expenditure. Induced either in the skeletal muscle after exercise or in adipose tissue following cold exposure and is present in the circulation. Able to stimulate energy expenditure associated with the browning of the white fat depots and improves glucose tolerance. This is Meteorin-like protein (metrnl) from Danio rerio (Zebrafish).